The following is a 164-amino-acid chain: Cyclic pyranopterin monophosphate synthase (164 aa).

Substrate contacts are provided by residues M75–H77 and M116–E117. D131 is a catalytic residue.

It belongs to the MoaC family. Homohexamer; trimer of dimers.

The catalysed reaction is (8S)-3',8-cyclo-7,8-dihydroguanosine 5'-triphosphate = cyclic pyranopterin phosphate + diphosphate. It functions in the pathway cofactor biosynthesis; molybdopterin biosynthesis. In terms of biological role, catalyzes the conversion of (8S)-3',8-cyclo-7,8-dihydroguanosine 5'-triphosphate to cyclic pyranopterin monophosphate (cPMP). The chain is Cyclic pyranopterin monophosphate synthase from Staphylococcus aureus (strain Mu3 / ATCC 700698).